Here is a 114-residue protein sequence, read N- to C-terminus: T cell receptor beta variable 5-6 (114 aa).

The N-terminal stretch at 1–21 (MGPGLLCWALLCLLGAGLVDA) is a signal peptide. The region spanning 22–114 (GVTQSPTHLI…SALYLCASSL (93 aa)) is the Ig-like domain. Cysteines 42 and 110 form a disulfide. An N-linked (GlcNAc...) asparagine glycan is attached at asparagine 90.

In terms of assembly, alpha-beta TR is a heterodimer composed of an alpha and beta chain; disulfide-linked. The alpha-beta TR is associated with the transmembrane signaling CD3 coreceptor proteins to form the TR-CD3 (TcR or TCR). The assembly of alpha-beta TR heterodimers with CD3 occurs in the endoplasmic reticulum where a single alpha-beta TR heterodimer associates with one CD3D-CD3E heterodimer, one CD3G-CD3E heterodimer and one CD247 homodimer forming a stable octameric structure. CD3D-CD3E and CD3G-CD3E heterodimers preferentially associate with TR alpha and TR beta chains, respectively. The association of the CD247 homodimer is the last step of TcR assembly in the endoplasmic reticulum and is required for transport to the cell surface.

It is found in the cell membrane. Its function is as follows. V region of the variable domain of T cell receptor (TR) beta chain that participates in the antigen recognition. Alpha-beta T cell receptors are antigen specific receptors which are essential to the immune response and are present on the cell surface of T lymphocytes. Recognize peptide-major histocompatibility (MH) (pMH) complexes that are displayed by antigen presenting cells (APC), a prerequisite for efficient T cell adaptive immunity against pathogens. Binding of alpha-beta TR to pMH complex initiates TR-CD3 clustering on the cell surface and intracellular activation of LCK that phosphorylates the ITAM motifs of CD3G, CD3D, CD3E and CD247 enabling the recruitment of ZAP70. In turn ZAP70 phosphorylates LAT, which recruits numerous signaling molecules to form the LAT signalosome. The LAT signalosome propagates signal branching to three major signaling pathways, the calcium, the mitogen-activated protein kinase (MAPK) kinase and the nuclear factor NF-kappa-B (NF-kB) pathways, leading to the mobilization of transcription factors that are critical for gene expression and essential for T cell growth and differentiation. The T cell repertoire is generated in the thymus, by V-(D)-J rearrangement. This repertoire is then shaped by intrathymic selection events to generate a peripheral T cell pool of self-MH restricted, non-autoaggressive T cells. Post-thymic interaction of alpha-beta TR with the pMH complexes shapes TR structural and functional avidity. This chain is T cell receptor beta variable 5-6, found in Homo sapiens (Human).